A 315-amino-acid polypeptide reads, in one-letter code: Probable cell division protein WhiA (315 aa).

Positions 280-313 form a DNA-binding region, H-T-H motif; sequence SLRELGKMLNPPVGKSGVNHRLRRIEKIADELKQ.

It belongs to the WhiA family.

Its function is as follows. Involved in cell division and chromosome segregation. This chain is Probable cell division protein WhiA, found in Clostridium botulinum (strain ATCC 19397 / Type A).